The following is a 357-amino-acid chain: DNA primase small subunit PriS (357 aa).

Residues aspartate 105, aspartate 107, and aspartate 259 contribute to the active site.

Belongs to the eukaryotic-type primase small subunit family. As to quaternary structure, heterodimer of a small subunit (PriS) and a large subunit (PriL). The cofactor is Mg(2+). Requires Mn(2+) as cofactor.

Its function is as follows. Catalytic subunit of DNA primase, an RNA polymerase that catalyzes the synthesis of short RNA molecules used as primers for DNA polymerase during DNA replication. The small subunit contains the primase catalytic core and has DNA synthesis activity on its own. Binding to the large subunit stabilizes and modulates the activity, increasing the rate of DNA synthesis while decreasing the length of the DNA fragments, and conferring RNA synthesis capability. The DNA polymerase activity may enable DNA primase to also catalyze primer extension after primer synthesis. May also play a role in DNA repair. The chain is DNA primase small subunit PriS from Methanococcus maripaludis (strain C6 / ATCC BAA-1332).